The primary structure comprises 172 residues: RNA silencing suppressor p19 (172 aa).

A compositionally biased stretch (basic and acidic residues) spans 1–20 (MERVIQGNDAREQANGERWD). The tract at residues 1–37 (MERVIQGNDAREQANGERWDGGSGGTTSGFKLPDESP) is disordered.

Belongs to the tombusvirus protein p19 family. Homodimer.

Its function is as follows. Viral suppressor of RNA silencing which binds specifically to silencing RNAs (siRNAs). Acts as a molecular caliper to specifically select siRNAs based on the length of the duplex region of the RNA. In Cynara cardunculus var. scolymus (Globe artichoke), this protein is RNA silencing suppressor p19.